The primary structure comprises 339 residues: Glycerol-3-phosphate dehydrogenase [NAD(P)+] (339 aa).

NADPH contacts are provided by S15, Y16, H36, and K110. Residues K110, G139, and T141 each contribute to the sn-glycerol 3-phosphate site. A143 lines the NADPH pocket. Sn-glycerol 3-phosphate-binding residues include K195, D248, S258, R259, and N260. K195 acts as the Proton acceptor in catalysis. R259 provides a ligand contact to NADPH. Residues V283 and E285 each contribute to the NADPH site.

This sequence belongs to the NAD-dependent glycerol-3-phosphate dehydrogenase family.

It is found in the cytoplasm. It carries out the reaction sn-glycerol 3-phosphate + NAD(+) = dihydroxyacetone phosphate + NADH + H(+). The enzyme catalyses sn-glycerol 3-phosphate + NADP(+) = dihydroxyacetone phosphate + NADPH + H(+). It functions in the pathway membrane lipid metabolism; glycerophospholipid metabolism. In terms of biological role, catalyzes the reduction of the glycolytic intermediate dihydroxyacetone phosphate (DHAP) to sn-glycerol 3-phosphate (G3P), the key precursor for phospholipid synthesis. The chain is Glycerol-3-phosphate dehydrogenase [NAD(P)+] from Shigella boydii serotype 18 (strain CDC 3083-94 / BS512).